Consider the following 797-residue polypeptide: Kinesin-like protein KIF18B (797 aa).

The 342-residue stretch at threonine 11–isoleucine 352 folds into the Kinesin motor domain. Glycine 110–threonine 117 is a binding site for ATP. Positions isoleucine 367 to isoleucine 402 form a coiled coil. 4 disordered regions span residues glutamate 412–leucine 476, alanine 528–proline 564, leucine 579–glutamine 640, and lysine 730–arginine 797. The span at methionine 594–threonine 608 shows a compositional bias: polar residues. Residues glycine 731–serine 744 are compositionally biased toward low complexity.

The protein belongs to the TRAFAC class myosin-kinesin ATPase superfamily. Kinesin family.

The protein resides in the nucleus. It localises to the cytoplasm. It is found in the cytoskeleton. May play an important role in microtubule plus-end depolymerizing activity in mitotic cells. The chain is Kinesin-like protein KIF18B (KIF18B) from Gallus gallus (Chicken).